The following is a 725-amino-acid chain: Homeobox protein unc-62 (725 aa).

Residues 133–218 (SSDVCSSASF…PLDIVGDERA (86 aa)) form the MEIS N-terminal domain. 6 disordered regions span residues 214–258 (GDER…PYEP), 295–317 (SSSSSQPQPGDHPLANGGTLHST), 329–359 (VSSPSTCSSGGLRQDSTPLSGETPMANGNSM), 386–419 (SLHQHHLHHPHHFPHHQLQPPAHHQDFLLPPPPQ), 491–555 (VKME…KRKV), and 615–661 (IDQN…PDPT). Residues 219-239 (SSSQPPMSPGSMGHHGHSGSP) show a composition bias toward low complexity. Residues 388-400 (HQHHLHHPHHFPH) show a composition bias toward basic residues. A compositionally biased stretch (low complexity) spans 498–508 (SVSSSKSGGKK). A compositionally biased stretch (polar residues) spans 541-550 (LSDSANGSQN). Residues 552-614 (KRKVPKVFSK…NARRRIVQPM (63 aa)) constitute a DNA-binding region (homeobox; TALE-type).

It belongs to the TALE/MEIS homeobox family.

The protein resides in the nucleus. Functionally, acts redundantly with ceh-20 and ceh-40 to perform overlapping roles during embryogenesis. Required for postembryonic development of the ectoderm, including the Q, V and P cell lineages, playing a crucial role in ensuring that these cells and their descendants undergo their invariant patterns of cell division, migration, fusion and morphogenesis. Has a role in the mig-13 pathway to promote anterior migration of neuroblasts in the Q lineage. Required for multiple roles in regulating vulva development. In Caenorhabditis briggsae, this protein is Homeobox protein unc-62 (unc-62).